A 679-amino-acid chain; its full sequence is Penicillin-binding protein PbpB (679 aa).

A disordered region spans residues 1 to 74 (MSRAAPRRAS…STRARRTRQV (74 aa)). Residues 1 to 90 (MSRAAPRRAS…GASFVFRHRT (90 aa)) are Cytoplasmic-facing. Residues 42–54 (ARQAQEATKSRPA) show a composition bias toward polar residues. Residues 91 to 111 (GNAVILVLMLVAATQLFFLQV) traverse the membrane as a helical segment. At 112 to 679 (SHAAGLRAQA…PGPPLVLQAT (568 aa)) the chain is on the extracellular side. The active-site Acyl-ester intermediate is the S386.

This sequence belongs to the transpeptidase family. In terms of assembly, interacts with Wag31. Cleaved by Rip1 in response to oxidative stress (H(2)O(2)), prevented by Wag31. Cleavage probably occurs near residues 102-103.

It localises to the cell membrane. Its pathway is cell wall biogenesis; peptidoglycan biosynthesis. In terms of biological role, synthesis of cross-linked peptidoglycan from the lipid intermediates. The protein is Penicillin-binding protein PbpB (pbpB) of Mycobacterium tuberculosis (strain ATCC 25618 / H37Rv).